A 444-amino-acid polypeptide reads, in one-letter code: Adenylosuccinate synthetase (444 aa).

GTP is bound by residues 12–18 and 40–42; these read GDEGKGK and GHT. Aspartate 13 acts as the Proton acceptor in catalysis. Aspartate 13 and glycine 40 together coordinate Mg(2+). IMP contacts are provided by residues 13-16, 38-41, threonine 128, arginine 142, glutamine 223, threonine 238, and arginine 302; these read DEGK and NAGH. Histidine 41 (proton donor) is an active-site residue. Substrate is bound at residue 298–304; it reads TTTGRRR. Residues arginine 304, 330–332, and 412–414 contribute to the GTP site; these read KLD and SLG.

This sequence belongs to the adenylosuccinate synthetase family. As to quaternary structure, homodimer. Mg(2+) is required as a cofactor.

The protein resides in the cytoplasm. It carries out the reaction IMP + L-aspartate + GTP = N(6)-(1,2-dicarboxyethyl)-AMP + GDP + phosphate + 2 H(+). Its pathway is purine metabolism; AMP biosynthesis via de novo pathway; AMP from IMP: step 1/2. Its function is as follows. Plays an important role in the de novo pathway of purine nucleotide biosynthesis. Catalyzes the first committed step in the biosynthesis of AMP from IMP. The sequence is that of Adenylosuccinate synthetase from Synechococcus elongatus (strain ATCC 33912 / PCC 7942 / FACHB-805) (Anacystis nidulans R2).